The following is a 1241-amino-acid chain: DNA-directed RNA polymerase subunit beta (1241 aa).

The disordered stretch occupies residues 1186-1210 (EDEIVPTAEKRSSNQDEEALELVDN). The segment covering 1200 to 1210 (QDEEALELVDN) has biased composition (acidic residues).

It belongs to the RNA polymerase beta chain family. In terms of assembly, the RNAP catalytic core consists of 2 alpha, 1 beta, 1 beta' and 1 omega subunit. When a sigma factor is associated with the core the holoenzyme is formed, which can initiate transcription.

The catalysed reaction is RNA(n) + a ribonucleoside 5'-triphosphate = RNA(n+1) + diphosphate. DNA-dependent RNA polymerase catalyzes the transcription of DNA into RNA using the four ribonucleoside triphosphates as substrates. The chain is DNA-directed RNA polymerase subunit beta from Clostridium novyi (strain NT).